Consider the following 95-residue polypeptide: Defensin-like protein 232 (95 aa).

Residues 1–26 (MRCTTLIMVSFVVSCLLLSLVEESEA) form the signal peptide. 4 disulfides stabilise this stretch: cysteine 33-cysteine 94, cysteine 43-cysteine 68, cysteine 51-cysteine 84, and cysteine 66-cysteine 86.

It belongs to the DEFL family. Flower buds.

Its subcellular location is the secreted. In Arabidopsis thaliana (Mouse-ear cress), this protein is Defensin-like protein 232 (SCRL23).